A 557-amino-acid chain; its full sequence is uncharacterized protein (557 aa).

The DhaL domain maps to 7–206 (SSFIDMLRLG…FACFLEGMLS (200 aa)).

This is an uncharacterized protein from Mycoplasma genitalium (strain ATCC 33530 / DSM 19775 / NCTC 10195 / G37) (Mycoplasmoides genitalium).